The sequence spans 392 residues: Gastricsin (392 aa).

The N-terminal stretch at 1-16 is a signal peptide; it reads MKWMVVALLCLPLLEA. A propeptide spans 17–62 (activation peptide); the sequence is ALIRVPLKKMKSIRETMKEQGVLKDFLKNHKYDPGQKYHFGKFGDY. The region spanning 76 to 389 is the Peptidase A1 domain; it reads YYGEISIGTP…DMGNNRVGLA (314 aa). The active site involves D94. 2 disulfides stabilise this stretch: C107–C112 and C270–C275. The active site involves D280. An intrachain disulfide couples C314 to C347.

Belongs to the peptidase A1 family.

The protein resides in the secreted. It catalyses the reaction More restricted specificity than pepsin A, but shows preferential cleavage at Tyr-|-Xaa bonds. High activity on hemoglobin.. In terms of biological role, hydrolyzes a variety of proteins. This is Gastricsin (Pgc) from Mus musculus (Mouse).